The chain runs to 930 residues: Protein translocase subunit SecA (930 aa).

Residues Q87, 105-109 (GEGKT), and D515 contribute to the ATP site. 4 residues coordinate Zn(2+): C914, C916, C925, and H926.

It belongs to the SecA family. As to quaternary structure, monomer and homodimer. Part of the essential Sec protein translocation apparatus which comprises SecA, SecYEG and auxiliary proteins SecDF-YajC and YidC. Requires Zn(2+) as cofactor.

Its subcellular location is the cell inner membrane. The protein localises to the cytoplasm. The enzyme catalyses ATP + H2O + cellular proteinSide 1 = ADP + phosphate + cellular proteinSide 2.. In terms of biological role, part of the Sec protein translocase complex. Interacts with the SecYEG preprotein conducting channel. Has a central role in coupling the hydrolysis of ATP to the transfer of proteins into and across the cell membrane, serving both as a receptor for the preprotein-SecB complex and as an ATP-driven molecular motor driving the stepwise translocation of polypeptide chains across the membrane. The protein is Protein translocase subunit SecA of Cupriavidus metallidurans (strain ATCC 43123 / DSM 2839 / NBRC 102507 / CH34) (Ralstonia metallidurans).